A 150-amino-acid chain; its full sequence is Cytochrome c oxidase subunit 5A, mitochondrial (150 aa).

Residues 1-41 (MLGAALRRCAVAATSRAGPRGLLHSAPNPGPAAAIQSVRCY) constitute a mitochondrion transit peptide. Positions 2–17 (LGAALRRCAVAATSRA) match the SIFI-degron motif. Residues Lys87 and Lys113 each carry the N6-acetyllysine modification. At Thr141 the chain carries Phosphothreonine.

It belongs to the cytochrome c oxidase subunit 5A family. As to quaternary structure, component of the cytochrome c oxidase (complex IV, CIV), a multisubunit enzyme composed of 14 subunits. The complex is composed of a catalytic core of 3 subunits MT-CO1, MT-CO2 and MT-CO3, encoded in the mitochondrial DNA, and 11 supernumerary subunits COX4I, COX5A, COX5B, COX6A, COX6B, COX6C, COX7A, COX7B, COX7C, COX8 and NDUFA4, which are encoded in the nuclear genome. The complex exists as a monomer or a dimer and forms supercomplexes (SCs) in the inner mitochondrial membrane with NADH-ubiquinone oxidoreductase (complex I, CI) and ubiquinol-cytochrome c oxidoreductase (cytochrome b-c1 complex, complex III, CIII), resulting in different assemblies (supercomplex SCI(1)III(2)IV(1) and megacomplex MCI(2)III(2)IV(2)). Interacts with AFG1L. Interacts with RAB5IF. In response to mitochondrial stress, the precursor protein is ubiquitinated by the SIFI complex in the cytoplasm before mitochondrial import, leading to its degradation. Within the SIFI complex, UBR4 initiates ubiquitin chain that are further elongated or branched by KCMF1.

It localises to the mitochondrion inner membrane. Its pathway is energy metabolism; oxidative phosphorylation. In terms of biological role, component of the cytochrome c oxidase, the last enzyme in the mitochondrial electron transport chain which drives oxidative phosphorylation. The respiratory chain contains 3 multisubunit complexes succinate dehydrogenase (complex II, CII), ubiquinol-cytochrome c oxidoreductase (cytochrome b-c1 complex, complex III, CIII) and cytochrome c oxidase (complex IV, CIV), that cooperate to transfer electrons derived from NADH and succinate to molecular oxygen, creating an electrochemical gradient over the inner membrane that drives transmembrane transport and the ATP synthase. Cytochrome c oxidase is the component of the respiratory chain that catalyzes the reduction of oxygen to water. Electrons originating from reduced cytochrome c in the intermembrane space (IMS) are transferred via the dinuclear copper A center (CU(A)) of subunit 2 and heme A of subunit 1 to the active site in subunit 1, a binuclear center (BNC) formed by heme A3 and copper B (CU(B)). The BNC reduces molecular oxygen to 2 water molecules using 4 electrons from cytochrome c in the IMS and 4 protons from the mitochondrial matrix. In Saguinus labiatus (Red-chested mustached tamarin), this protein is Cytochrome c oxidase subunit 5A, mitochondrial (COX5A).